The following is a 100-amino-acid chain: Small ribosomal subunit protein uS14c (100 aa).

The protein belongs to the universal ribosomal protein uS14 family. Part of the 30S ribosomal subunit.

It is found in the plastid. Its function is as follows. Binds 16S rRNA, required for the assembly of 30S particles. The sequence is that of Small ribosomal subunit protein uS14c from Aneura mirabilis (Parasitic liverwort).